We begin with the raw amino-acid sequence, 51 residues long: Large ribosomal subunit protein bL33 (51 aa).

Belongs to the bacterial ribosomal protein bL33 family.

This chain is Large ribosomal subunit protein bL33, found in Alkalilimnicola ehrlichii (strain ATCC BAA-1101 / DSM 17681 / MLHE-1).